Reading from the N-terminus, the 92-residue chain is Movement protein (92 aa).

Residues 38 to 58 traverse the membrane as a helical segment; the sequence is VIALVVILVSVGVFYLAYTLF.

It belongs to the mastrevirus movement protein family. Interacts with the capsid protein (CP). Part of a MP-CP-viral DNA complex.

It is found in the host membrane. Functionally, involved in the viral transport within, and between cells. The sequence is that of Movement protein from Phaseolus vulgaris (Kidney bean).